The chain runs to 249 residues: Tumor necrosis factor ligand superfamily member 12 (249 aa).

Over 1-21 (MAARRSQRRRGRRGEPGTALL) the chain is Cytoplasmic. A helical; Signal-anchor for type II membrane protein membrane pass occupies residues 22–42 (VPLALGLGLALACLGLLLAVV). Residues 43 to 249 (SLGSRASLSA…LTYFGLFQVH (207 aa)) are Extracellular-facing. A disordered region spans residues 55-85 (PAQEELVAEEDQDPSELNPQTEESQDPAPFL). Over residues 56-68 (AQEELVAEEDQDP) the composition is skewed to acidic residues. The 142-residue stretch at 107–248 (IAAHYEVHPR…FLTYFGLFQV (142 aa)) folds into the THD domain. A glycan (N-linked (GlcNAc...) asparagine) is linked at asparagine 139. Residues cysteine 191 and cysteine 210 are joined by a disulfide bond.

It belongs to the tumor necrosis factor family. In terms of assembly, homotrimer. Interacts with the angiogenic factor AGGF1/VG5Q. In terms of processing, the soluble form derives from the membrane form by proteolytic processing. In terms of tissue distribution, highly expressed in adult heart, pancreas, skeletal muscle, brain, colon, small intestine, lung, ovary, prostate, spleen, lymph node, appendix and peripheral blood lymphocytes. Low expression in kidney, testis, liver, placenta, thymus and bone marrow. Also detected in fetal kidney, liver, lung and brain.

It is found in the cell membrane. Its subcellular location is the secreted. Functionally, binds to FN14 and possibly also to TNRFSF12/APO3. Weak inducer of apoptosis in some cell types. Mediates NF-kappa-B activation. Promotes angiogenesis and the proliferation of endothelial cells. Also involved in induction of inflammatory cytokines. Promotes IL8 secretion. This Homo sapiens (Human) protein is Tumor necrosis factor ligand superfamily member 12 (TNFSF12).